The primary structure comprises 473 residues: MYNKITPPTTGEKITFKNGEPVVPDNPIIPFIRGDGTGIDIWPATEKVLDAAVAKAYQGKRKISWFKVYAGDEACDLYGTYQYLPEDTLTAIREYGVAIKGPLTTPVGGGIRSLNVALRQIFDLYACVRPCRYYAGTPSPHKNPEKLDVIVYRENTEDIYLGIEWKQGSEIGDRLISILNKELIPATPEHGKKQIPLDSGIGIKPISKTGSQRLVRRAIKHALTLPKDKQQVTLVHKGNIMKYTEGAFRDWGYELATSEFRQETVTERESWILSNKEKNPNISLEDNARQIDPGFDALTPEKKAQIVKEVETVLNSIWESHGNGKWKEKVLVNDRIADSIFQQIQTRPDEYSILATMNLNGDYLSDAAAAIVGGLGMGPGANIGDSCAVFEATHGTAPKHAGLDRINPGSVILSGVMMLEYMGWQEAADLIKKGLSDAIANSQVTYDLARLLEPPVEPLKCSEFADAIIKHFG.

Thr104 contributes to the NADP(+) binding site. Ser113, Asn115, Arg119, Arg129, and Arg153 together coordinate D-threo-isocitrate. Asp362 is a Mg(2+) binding site. NADP(+) contacts are provided by residues 394-400, Asn407, Tyr446, and Arg450; that span reads HGTAPKH.

Belongs to the isocitrate and isopropylmalate dehydrogenases family. Homodimer. Mg(2+) serves as cofactor. Requires Mn(2+) as cofactor.

The catalysed reaction is D-threo-isocitrate + NADP(+) = 2-oxoglutarate + CO2 + NADPH. Inhibited by either oxaloacetate or glyoxylate. Also inhibited by the adenine nucleotides AMP, ADP and ATP and by NADPH, which inhibits the activity by 28% when it is added to the assay mixture at 0.25 mM. In terms of biological role, catalyzes the oxidative decarboxylation of isocitrate to 2-oxoglutarate and carbon dioxide with the concomitant reduction of NADP(+). The sequence is that of Isocitrate dehydrogenase [NADP] from Nostoc sp. (strain PCC 7120 / SAG 25.82 / UTEX 2576).